An 846-amino-acid chain; its full sequence is Translation initiation factor IF-2 (846 aa).

The interval 198-219 is disordered; sequence YKREEEEKKSKAKKAGGKGFKK. Residues 207–219 show a composition bias toward basic residues; that stretch reads SKAKKAGGKGFKK. One can recognise a tr-type G domain in the interval 345-512; the sequence is SRAPVVTIMG…AVLLQSEVLE (168 aa). The segment at 354–361 is G1; the sequence is GHVDHGKT. Residue 354 to 361 participates in GTP binding; it reads GHVDHGKT. Positions 379–383 are G2; the sequence is GITQH. The interval 400 to 403 is G3; it reads DTPG. Residues 400-404 and 454-457 each bind GTP; these read DTPGH and NKID. The segment at 454–457 is G4; it reads NKID. Residues 490 to 492 are G5; sequence SAK.

It belongs to the TRAFAC class translation factor GTPase superfamily. Classic translation factor GTPase family. IF-2 subfamily.

It localises to the cytoplasm. Functionally, one of the essential components for the initiation of protein synthesis. Protects formylmethionyl-tRNA from spontaneous hydrolysis and promotes its binding to the 30S ribosomal subunits. Also involved in the hydrolysis of GTP during the formation of the 70S ribosomal complex. The sequence is that of Translation initiation factor IF-2 from Francisella tularensis subsp. tularensis (strain SCHU S4 / Schu 4).